A 626-amino-acid chain; its full sequence is Chaperone protein HtpG (626 aa).

The interval 1 to 341 is a; substrate-binding; that stretch reads MAKKEFKAES…SEDLSLNISR (341 aa). Positions 342-552 are b; that stretch reads EMLQHDRQLK…DGEVTIEMEK (211 aa). Residues 553 to 626 are c; sequence ILNAMPDSQN…FTNNICKVMV (74 aa).

The protein belongs to the heat shock protein 90 family. In terms of assembly, homodimer.

The protein resides in the cytoplasm. Its function is as follows. Molecular chaperone. Has ATPase activity. This chain is Chaperone protein HtpG, found in Bacillus subtilis (strain 168).